Here is a 411-residue protein sequence, read N- to C-terminus: AT-hook motif nuclear-localized protein 14 (411 aa).

Disordered stretches follow at residues 1–32 (MDPN…QRLT), 54–164 (ASTG…LGSV), 289–348 (KDAA…HQAG), and 366–411 (THSR…QIPD). Basic residues predominate over residues 7-19 (HHHHQQQQLHHLH). Residues 20 to 29 (QQQQQQQQQQ) are compositionally biased toward low complexity. Over residues 54-66 (ASTGNAVPSSNNG) the composition is skewed to polar residues. A Bipartite nuclear localization signal motif is present at residues 105-113 (KRKRGRPRK). Residues 105-117 (KRKRGRPRKYVTP) constitute a DNA-binding region (a.T hook). Low complexity-rich tracts occupy residues 120–135 (ALAA…SSSA) and 144–159 (VTGG…SKKS). Residues 165 to 305 (GKTGQCFTPH…GKGDASNSGS (141 aa)) enclose the PPC domain. Polar residues predominate over residues 306–315 (RLTSPVSSGQ). Residues 374–390 (RGGGNSGHDGRGGGGYD) show a composition bias toward gly residues.

The protein resides in the nucleus. Transcription factor that specifically binds AT-rich DNA sequences related to the nuclear matrix attachment regions (MARs). The polypeptide is AT-hook motif nuclear-localized protein 14 (Arabidopsis thaliana (Mouse-ear cress)).